Reading from the N-terminus, the 57-residue chain is Metallothionein-2 (57 aa).

A beta region spans residues 1-28 (PDPCCNDKCDCKEGECKTGCKCTSCRCP). Positions 4, 5, 9, 11, 16, 20, 22, 25, 27, 30, 33, 37, 39, 45, 49, 53, 55, and 56 each coordinate a divalent metal cation. The alpha stretch occupies residues 29–57 (PCEQCSSGCKCANKEDCRKTCSKPCSCCP).

The protein belongs to the metallothionein superfamily. Type 3 family.

Metallothioneins have a high content of cysteine residues that bind various heavy metals. Class I MTS in marine crustacea are involved in the sequestration of elevated levels of heavy-metal ions. The sequence is that of Metallothionein-2 from Scylla serrata (Mud crab).